The sequence spans 215 residues: MAASQTIADSKRAFHQAFPHVIAPLYRRLADELLVELHLLSHQSRFEANELFSVGLCTVFDTFIKGYRPEAQTDALFRALCSSNGFDAAKLRKTYASLVEQAKGKDPESLKDWLSSHALKEGSHYSRLMAVGLMSLLKAAAADATDSDTEAIVKQSKELAEGLGLPTDRVEKDLTLFGSNSERMDQAVELVEETIAAEKRKKERRLEEQAQRTSS.

The stretch at 182 to 213 forms a coiled coil; that stretch reads ERMDQAVELVEETIAAEKRKKERRLEEQAQRT.

This sequence belongs to the THF1 family.

Functionally, may be involved in photosynthetic membrane biogenesis. The polypeptide is Protein Thf1 (Synechococcus sp. (strain CC9605)).